The sequence spans 871 residues: CRISPR system Cmr subunit Cmr2 (871 aa).

A not required for target RNA cleavage region spans residues 1-215 (MVNIKEKLFV…THLDLTSALS (215 aa)). His13, Asp14, and His25 together coordinate Mn(2+). The Zn(2+) site is built by Cys448, Cys451, Cys478, and Cys481. Residues 592–752 (KYYAILVMDG…GKDTLAIGLL (161 aa)) enclose the GGDEF domain. The Mn(2+) site is built by Asp600, Glu656, Asp673, Asp674, Glu694, and Glu700.

This sequence belongs to the CRISPR system Cmr2 family. Part of the type III-B Cmr ribonucleoprotein (RNP) complex, an elongated RNP with Cmr2 and Cmr3 as the base, with Cmr4 and Cmr5 forming a helical core along the mature crRNA (39 or 45 nt in length), while the complex is capped by Cmr6 and Cmr1. The 5' end of the crRNA is bound to Cmr2 and Cmr3, while Cmr6 and a Cmr1 subunit (Cmr1-1 or Cmr1-2) cap the 3' end of the crRNA. The target RNA lies antiparallel to the crRNA, with its 5' end near Cmr1 and Cmr6 and its 3' end near Cmr2 and Cmr3; major target cleavage occurs nears the junction of Cmr1/Cmr6 and Cmr4/Cmr, with minor cleavage occurring at 6 nt intervals which coincide with the proposed spacing of Cmr4 subunits. Forms a 1:1 complex with Cmr3. The Cmr2-Cmr3 complex non-specifically binds ss-target RNA and crRNA. Interacts with Cmr3, Cmr4 and Cmr5. It depends on Ca(2+) as a cofactor. Mn(2+) serves as cofactor. Zn(2+) is required as a cofactor.

The protein resides in the cytoplasm. Functionally, CRISPR (clustered regularly interspaced short palindromic repeat), is an adaptive immune system that provides protection against mobile genetic elements (viruses, transposable elements and conjugative plasmids). CRISPR clusters contain sequences complementary to antecedent mobile elements and target invading nucleic acids. CRISPR clusters are transcribed and processed into CRISPR RNA (crRNA), formerly called psiRNA (prokaryotic silencing) in this organism. Part of the Cmr ribonucleoprotein complex which has divalent cation-dependent endoribonuclease activity specific for ssRNA complementary to the crRNA (target RNA), generating 5' hydroxy- and 3' phosphate or 2'-3' cyclic phosphate termini. Cmr4 is probably the subunit that cleaves target RNA. Cmr complex does not cleave ssDNA complementary to the crRNA. Cleavage of target RNA is guided by the crRNA; substrate cleavage occurs a fixed distance (14 nt) from the 3' end of the crRNA. In vitro reconstitution shows Cmr1-2 and Cmr5 are not absolutely necessary for target cleavage. This is CRISPR system Cmr subunit Cmr2 from Pyrococcus furiosus (strain ATCC 43587 / DSM 3638 / JCM 8422 / Vc1).